The chain runs to 520 residues: Protein root UVB sensitive 4 (520 aa).

A run of 2 helical transmembrane segments spans residues I275–F295 and L301–I321.

Belongs to the RUS1 family.

The protein resides in the membrane. The chain is Protein root UVB sensitive 4 from Arabidopsis thaliana (Mouse-ear cress).